We begin with the raw amino-acid sequence, 690 residues long: Heterogeneous nuclear ribonucleoprotein M (690 aa).

Positions 1 to 13 (MAAGVEAAAEVAA) are enriched in low complexity. Residues 1 to 63 (MAAGVEAAAE…KRGGNRFEPY (63 aa)) form a disordered region. N-acetylalanine is present on Ala-2. Lys-17 is covalently cross-linked (Glycyl lysine isopeptide (Lys-Gly) (interchain with G-Cter in SUMO2)). Ser-29 carries the post-translational modification Phosphoserine. Glycyl lysine isopeptide (Lys-Gly) (interchain with G-Cter in SUMO2) cross-links involve residues Lys-37, Lys-68, and Lys-82. The span at 37-49 (KGEERPTQNEKRK) shows a compositional bias: basic and acidic residues. 2 consecutive RRM domains span residues 70-148 (YRAF…EDPD) and 164-241 (STVF…MDER). Residue Ser-85 is modified to Phosphoserine. Glycyl lysine isopeptide (Lys-Gly) (interchain with G-Cter in SUMO2) cross-links involve residues Lys-87 and Lys-126. Position 133 is an N6-acetyllysine; alternate (Lys-133). Lys-133 participates in a covalent cross-link: Glycyl lysine isopeptide (Lys-Gly) (interchain with G-Cter in SUMO2); alternate. Glycyl lysine isopeptide (Lys-Gly) (interchain with G-Cter in SUMO2) cross-links involve residues Lys-142 and Lys-144. Ser-164 carries the post-translational modification Phosphoserine. Lys-181 participates in a covalent cross-link: Glycyl lysine isopeptide (Lys-Gly) (interchain with G-Cter in SUMO2). Lys-237 is modified (N6-acetyllysine; alternate). Residue Lys-237 forms a Glycyl lysine isopeptide (Lys-Gly) (interchain with G-Cter in SUMO2); alternate linkage. Glycyl lysine isopeptide (Lys-Gly) (interchain with G-Cter in SUMO2) cross-links involve residues Lys-245 and Lys-305. 2 positions are modified to phosphoserine: Ser-325 and Ser-337. Residues Lys-341 and Lys-348 each participate in a glycyl lysine isopeptide (Lys-Gly) (interchain with G-Cter in SUMO2) cross-link. Ser-357 carries the phosphoserine modification. 4 tandem repeats follow at residues 360 to 365 (GIERMG), 367 to 372 (GIDRIS), 375 to 380 (GMERMG), and 386 to 391 (GMDRVG). The 27 X 6 AA repeats of [GEVSTPAN]-[ILMV]-[DE]-[RH]-[MLVI]-[GAV] stretch occupies residues 360-568 (GIERMGPGID…ALGAGIERMG (209 aa)). Ser-392 is modified (phosphoserine). Repeat copies occupy residues 393-398 (EIERMG), 400-405 (VMDRMG), and 406-411 (SVERMG). The residue at position 412 (Ser-412) is a Phosphoserine. 4 consecutive repeat copies span residues 413-418 (GIERMG), 421-426 (GLDHMA), 428-433 (SIERMG), and 435-440 (TMERIG). A Phosphoserine modification is found at Ser-428. Ser-441 is modified (phosphoserine). 16 tandem repeats follow at residues 442 to 447 (GVERMG), 453 to 458 (GLERMA), 460 to 465 (PIDRVG), 467 to 472 (TIERMG), 474 to 479 (GVERMG), 481 to 486 (AIERMG), 488 to 493 (SMDRMV), 500 to 505 (GLERMG), 507 to 512 (VMDRMA), 514 to 519 (GLERMG), 522 to 527 (NLERMG), 528 to 532 (LERMG), 535 to 540 (SLERMG), 541 to 545 (LERMG), 548 to 553 (SLERMG), and 563 to 568 (GIERMG). An Omega-N-methylarginine modification is found at Arg-456. Ser-488 carries the post-translational modification Phosphoserine. A Phosphoserine modification is found at Ser-535. Ser-548 is subject to Phosphoserine. Residues Ser-578, Ser-593, and Ser-597 each carry the phosphoserine modification. Lys-611 participates in a covalent cross-link: Glycyl lysine isopeptide (Lys-Gly) (interchain with G-Cter in SUMO2). The 77-residue stretch at 613 to 689 (CQIFVRNLPF…REIDVRIDRN (77 aa)) folds into the RRM 3 domain. At Thr-625 the chain carries Phosphothreonine. A Glycyl lysine isopeptide (Lys-Gly) (interchain with G-Cter in SUMO2) cross-link involves residue Lys-627. Lys-632 carries the N6-acetyllysine modification. Glycyl lysine isopeptide (Lys-Gly) (interchain with G-Cter in SUMO2) cross-links involve residues Lys-645 and Lys-652. Position 658 is an N6-acetyllysine; alternate (Lys-658). Lys-658 is covalently cross-linked (Glycyl lysine isopeptide (Lys-Gly) (interchain with G-Cter in SUMO2); alternate). Residue Lys-658 forms a Glycyl lysine isopeptide (Lys-Gly) (interchain with G-Cter in SUMO1); alternate linkage. A Phosphoserine modification is found at Ser-661. Residue Lys-676 forms a Glycyl lysine isopeptide (Lys-Gly) (interchain with G-Cter in SUMO2) linkage.

In terms of assembly, identified in the spliceosome C complex. Interacts with PPIA/CYPA. In terms of processing, sumoylated. As to expression, expressed in all tissues tested, including liver, heart, lung, skeletal muscle, kidney, stomach, large intestine, small intestine, pancreas, spleen, peritoneal macrophage and thyroid.

It is found in the nucleus matrix. Pre-mRNA binding protein, binds avidly to poly(G) and poly(U) RNA homopolymers. Involved in splicing. Acts as a receptor for carcinoembryonic antigen in Kupffer cells, may initiate a series of signaling events leading to tyrosine phosphorylation of proteins and induction of IL-1 alpha, IL-6, IL-10 and tumor necrosis factor alpha cytokines. The protein is Heterogeneous nuclear ribonucleoprotein M (Hnrnpm) of Rattus norvegicus (Rat).